A 143-amino-acid chain; its full sequence is Large ribosomal subunit protein uL11 (143 aa).

It belongs to the universal ribosomal protein uL11 family. Part of the ribosomal stalk of the 50S ribosomal subunit. Interacts with L10 and the large rRNA to form the base of the stalk. L10 forms an elongated spine to which L12 dimers bind in a sequential fashion forming a multimeric L10(L12)X complex. In terms of processing, one or more lysine residues are methylated.

In terms of biological role, forms part of the ribosomal stalk which helps the ribosome interact with GTP-bound translation factors. The polypeptide is Large ribosomal subunit protein uL11 (Bordetella pertussis (strain Tohama I / ATCC BAA-589 / NCTC 13251)).